Reading from the N-terminus, the 245-residue chain is Demethylmenaquinone methyltransferase (245 aa).

Residues Thr70, Asp90, and 118–119 (DC) contribute to the S-adenosyl-L-methionine site.

Belongs to the class I-like SAM-binding methyltransferase superfamily. MenG/UbiE family.

It catalyses the reaction a 2-demethylmenaquinol + S-adenosyl-L-methionine = a menaquinol + S-adenosyl-L-homocysteine + H(+). The protein operates within quinol/quinone metabolism; menaquinone biosynthesis; menaquinol from 1,4-dihydroxy-2-naphthoate: step 2/2. Functionally, methyltransferase required for the conversion of demethylmenaquinol (DMKH2) to menaquinol (MKH2). This chain is Demethylmenaquinone methyltransferase, found in Bacteroides fragilis (strain ATCC 25285 / DSM 2151 / CCUG 4856 / JCM 11019 / LMG 10263 / NCTC 9343 / Onslow / VPI 2553 / EN-2).